Here is a 76-residue protein sequence, read N- to C-terminus: uncharacterized protein (76 aa).

This is an uncharacterized protein from Sulfolobus islandicus rod-shaped virus 1 (SIRV-1).